A 162-amino-acid chain; its full sequence is HTH-type transcriptional regulator IscR (162 aa).

In terms of domain architecture, HTH rrf2-type spans 2-131; the sequence is RLTSKGRYAV…NNITLGELVN (130 aa). The segment at residues 28–51 is a DNA-binding region (H-T-H motif); that stretch reads LADISERQGISLSYLEQLFSRLRK. 3 residues coordinate [2Fe-2S] cluster: Cys-92, Cys-98, and Cys-104. Residues 140-162 form a disordered region; sequence GRQHTHDAPRTRTQDAIDVKLRA. Positions 143–162 are enriched in basic and acidic residues; it reads HTHDAPRTRTQDAIDVKLRA.

It depends on [2Fe-2S] cluster as a cofactor.

Its function is as follows. Regulates the transcription of several operons and genes involved in the biogenesis of Fe-S clusters and Fe-S-containing proteins. The polypeptide is HTH-type transcriptional regulator IscR (Shigella flexneri).